A 326-amino-acid chain; its full sequence is Tagatose 1,6-diphosphate aldolase (326 aa).

Belongs to the aldolase LacD family.

The catalysed reaction is D-tagatofuranose 1,6-bisphosphate = D-glyceraldehyde 3-phosphate + dihydroxyacetone phosphate. The protein operates within carbohydrate metabolism; D-tagatose 6-phosphate degradation; D-glyceraldehyde 3-phosphate and glycerone phosphate from D-tagatose 6-phosphate: step 2/2. This Staphylococcus aureus (strain Mu3 / ATCC 700698) protein is Tagatose 1,6-diphosphate aldolase.